A 382-amino-acid polypeptide reads, in one-letter code: Alkanesulfonate monooxygenase (382 aa).

It belongs to the SsuD family.

It carries out the reaction an alkanesulfonate + FMNH2 + O2 = an aldehyde + FMN + sulfite + H2O + 2 H(+). Its function is as follows. Catalyzes the desulfonation of aliphatic sulfonates. This Ectopseudomonas mendocina (strain ymp) (Pseudomonas mendocina) protein is Alkanesulfonate monooxygenase.